Consider the following 68-residue polypeptide: Large ribosomal subunit protein bL33c (68 aa).

It belongs to the bacterial ribosomal protein bL33 family.

It is found in the plastid. The protein resides in the chloroplast. This is Large ribosomal subunit protein bL33c from Lactuca sativa (Garden lettuce).